The chain runs to 507 residues: Cell cycle serine/threonine-protein kinase hsk1 (507 aa).

Ser22 is subject to Phosphoserine. The Protein kinase domain occupies 68–433 (YRLIEKIGEG…AEEALDHDFL (366 aa)). Residues 74–82 (IGEGTFSSV) and Lys129 each bind ATP. The active-site Proton acceptor is Asp216. Thr291 carries the post-translational modification Phosphothreonine. Residues 475-507 (FKEQEETDEPTSLSKRKRSIDEILPNDALQDGA) form a disordered region. Ser493 is modified (phosphoserine).

The protein belongs to the protein kinase superfamily. Ser/Thr protein kinase family. CDC7 subfamily. As to quaternary structure, heterodimer with the regulatory subunit him1/dfp1. May form homooligomeric complexes. Interacts with mcm10. In terms of processing, autophosphorylated. Phosphorylated by cds1 in vitro.

It is found in the nucleus. The catalysed reaction is L-seryl-[protein] + ATP = O-phospho-L-seryl-[protein] + ADP + H(+). It carries out the reaction L-threonyl-[protein] + ATP = O-phospho-L-threonyl-[protein] + ADP + H(+). Its activity is regulated as follows. Phosphorylation of exogenous substrates activated by Dfp1. Required for G1/S transition. Plays a role in DNA replication checkpoint signaling through regulating rad3 and cds1. Involved in the maintenance of mitotic chromosome structures during S phase through regulating the function of rad21. Required for initiation of mitotic DNA replication through phosphorylating mcm2/cdc19. Required for genome integrity. The polypeptide is Cell cycle serine/threonine-protein kinase hsk1 (hsk1) (Schizosaccharomyces pombe (strain 972 / ATCC 24843) (Fission yeast)).